The following is a 188-amino-acid chain: Pro-adrenomedullin (188 aa).

Positions methionine 1 to threonine 21 are cleaved as a signal peptide. Position 41 is an arginine amide (arginine 41). The propeptide occupies glutamate 45 to valine 92. An intrachain disulfide couples cysteine 110 to cysteine 115. Residues aspartate 131 to proline 177 are disordered. Position 146 is a tyrosine amide (tyrosine 146). Positions serine 153–isoleucine 188 are cleaved as a propeptide — preproAM C-terminal fragment.

Belongs to the adrenomedullin family. Highly expressed in adrenal glands, lung and kidney.

The protein localises to the secreted. In terms of biological role, adrenomedullin/ADM and proadrenomedullin N-20 terminal peptide/PAMP are peptide hormones that act as potent hypotensive and vasodilatator agents. Numerous actions have been reported most related to the physiologic control of fluid and electrolyte homeostasis. Its function is as follows. ADM function is mediated by the CALCRL-RAMP2 and CALCRL-RAMP3 receptor complexes with ADM showing the highest potency for the CALCRL-RAMP2 complex. This is Pro-adrenomedullin (ADM) from Sus scrofa (Pig).